Consider the following 286-residue polypeptide: Tyrosine recombinase Tlet_1492 (286 aa).

The Core-binding (CB) domain maps to 1–86 (MERILQNFSD…SLRSFFNYLQ (86 aa)). A Tyr recombinase domain is found at 107–280 (RIPDFLLPSE…VDQEKFDAIN (174 aa)). Active-site residues include R143, K168, H232, R235, and H258. Y267 serves as the catalytic O-(3'-phospho-DNA)-tyrosine intermediate.

Belongs to the 'phage' integrase family.

Its subcellular location is the cytoplasm. Functionally, site-specific tyrosine recombinase, which acts by catalyzing the cutting and rejoining of the recombining DNA molecules. This Pseudothermotoga lettingae (strain ATCC BAA-301 / DSM 14385 / NBRC 107922 / TMO) (Thermotoga lettingae) protein is Tyrosine recombinase Tlet_1492.